The following is a 472-amino-acid chain: Probable endopolygalacturonase D (472 aa).

An N-terminal signal peptide occupies residues 1–16 (MKRGALLVPFVPLALA). Asn24 carries N-linked (GlcNAc...) asparagine glycosylation. Cys129 and Cys144 are disulfide-bonded. 3 PbH1 repeats span residues 236 to 258 (MYYS…DIEH), 259 to 297 (TENL…DIKS), and 298 to 319 (STNL…AVSS). An N-linked (GlcNAc...) asparagine glycan is attached at Asn300. The active-site Proton donor is Asp312. Cys314 and Cys330 are disulfide-bonded. The active site involves His334. PbH1 repeat units lie at residues 349 to 370 (VDGV…RIKS), 378 to 400 (VSNI…DIQQ), 412 to 433 (TNGV…SDGK), and 444 to 467 (CSNF…YPTD). N-linked (GlcNAc...) asparagine glycosylation is found at Asn361, Asn385, and Asn419. Disulfide bonds link Cys439–Cys444 and Cys462–Cys469.

This sequence belongs to the glycosyl hydrolase 28 family.

The protein resides in the secreted. It carries out the reaction (1,4-alpha-D-galacturonosyl)n+m + H2O = (1,4-alpha-D-galacturonosyl)n + (1,4-alpha-D-galacturonosyl)m.. Functionally, involved in maceration and soft-rotting of plant tissue. Hydrolyzes the 1,4-alpha glycosidic bonds of de-esterified pectate in the smooth region of the plant cell wall. This is Probable endopolygalacturonase D (pgaD) from Neosartorya fischeri (strain ATCC 1020 / DSM 3700 / CBS 544.65 / FGSC A1164 / JCM 1740 / NRRL 181 / WB 181) (Aspergillus fischerianus).